The following is a 160-amino-acid chain: Cytochrome b6-f complex subunit 4 (160 aa).

Helical transmembrane passes span 36 to 56, 95 to 115, and 131 to 151; these read LLYIFPVVILGTIACVVGLAV, LLGIALQTLIPLGLMILPFIE, and SVFLFGTFLTIYLGIGACLPI.

Belongs to the cytochrome b family. PetD subfamily. In terms of assembly, the 4 large subunits of the cytochrome b6-f complex are cytochrome b6, subunit IV (17 kDa polypeptide, PetD), cytochrome f and the Rieske protein, while the 4 small subunits are PetG, PetL, PetM and PetN. The complex functions as a dimer.

The protein resides in the cellular thylakoid membrane. Component of the cytochrome b6-f complex, which mediates electron transfer between photosystem II (PSII) and photosystem I (PSI), cyclic electron flow around PSI, and state transitions. The polypeptide is Cytochrome b6-f complex subunit 4 (Prochlorococcus marinus subsp. pastoris (strain CCMP1986 / NIES-2087 / MED4)).